Here is a 36-residue protein sequence, read N- to C-terminus: Potassium channel toxin alpha-KTx 11.3 (36 aa).

3 disulfide bridges follow: Cys-8-Cys-27, Cys-13-Cys-33, and Cys-17-Cys-35.

This sequence belongs to the short scorpion toxin superfamily. Potassium channel inhibitor family. Alpha-KTx 11 subfamily. Expressed by the venom gland.

The protein resides in the secreted. Functionally, binds and inhibits voltage-sensitive potassium channels. Inhibits the vertebrate potassium channel Kv1.1/KCNA1 with low affinity. This Parabuthus granulatus (Granulated thick-tailed scorpion) protein is Potassium channel toxin alpha-KTx 11.3.